The following is a 207-amino-acid chain: Probable nicotinate-nucleotide adenylyltransferase (207 aa).

Belongs to the NadD family.

It carries out the reaction nicotinate beta-D-ribonucleotide + ATP + H(+) = deamido-NAD(+) + diphosphate. The protein operates within cofactor biosynthesis; NAD(+) biosynthesis; deamido-NAD(+) from nicotinate D-ribonucleotide: step 1/1. Functionally, catalyzes the reversible adenylation of nicotinate mononucleotide (NaMN) to nicotinic acid adenine dinucleotide (NaAD). The polypeptide is Probable nicotinate-nucleotide adenylyltransferase (Desulfitobacterium hafniense (strain DSM 10664 / DCB-2)).